The following is a 209-amino-acid chain: Imidazole glycerol phosphate synthase subunit HisH (209 aa).

The Glutamine amidotransferase type-1 domain maps to 4 to 209 (PVVVFEYGSG…RLLANWIGSL (206 aa)). Cys-82 (nucleophile) is an active-site residue. Catalysis depends on residues His-190 and Glu-192.

In terms of assembly, heterodimer of HisH and HisF.

It localises to the cytoplasm. The enzyme catalyses 5-[(5-phospho-1-deoxy-D-ribulos-1-ylimino)methylamino]-1-(5-phospho-beta-D-ribosyl)imidazole-4-carboxamide + L-glutamine = D-erythro-1-(imidazol-4-yl)glycerol 3-phosphate + 5-amino-1-(5-phospho-beta-D-ribosyl)imidazole-4-carboxamide + L-glutamate + H(+). The catalysed reaction is L-glutamine + H2O = L-glutamate + NH4(+). Its pathway is amino-acid biosynthesis; L-histidine biosynthesis; L-histidine from 5-phospho-alpha-D-ribose 1-diphosphate: step 5/9. Its function is as follows. IGPS catalyzes the conversion of PRFAR and glutamine to IGP, AICAR and glutamate. The HisH subunit catalyzes the hydrolysis of glutamine to glutamate and ammonia as part of the synthesis of IGP and AICAR. The resulting ammonia molecule is channeled to the active site of HisF. The chain is Imidazole glycerol phosphate synthase subunit HisH from Leifsonia xyli subsp. xyli (strain CTCB07).